Consider the following 195-residue polypeptide: Cysteine/O-acetylserine efflux protein (195 aa).

The Periplasmic segment spans residues 1–7 (MTPTLLS). The chain crosses the membrane as a helical span at residues 8 to 28 (AFWTYTLITAMTPGPNNILAL). Over 29–46 (SSATSHGFRQSTRVLAGM) the chain is Cytoplasmic. Residues 47–67 (SLGFLIVMLLCAGISFSLAVI) traverse the membrane as a helical segment. The Periplasmic segment spans residues 68-69 (DP). A helical transmembrane segment spans residues 70-90 (AAVHLLSWAGAAYIVWLAWKI). Residues 91-104 (ATSPTKEDGLQAKP) are Cytoplasmic-facing. The helical transmembrane segment at 105 to 125 (ISFWASFALQFVNVKIILYGV) threads the bilayer. Residues 126-141 (TALSTFVLPQTQALSW) lie on the Periplasmic side of the membrane. A helical membrane pass occupies residues 142–162 (VVGVSVLLAMIGTFGNVCWAL). The Cytoplasmic portion of the chain corresponds to 163–176 (AGHLFQRLFRQYGR). The chain crosses the membrane as a helical span at residues 177 to 194 (QLNIVLALLLIYCAVRIF). Position 195 (Y195) is a topological domain, periplasmic.

Belongs to the Rht family.

Its subcellular location is the cell inner membrane. The enzyme catalyses O-acetyl-L-serine(in) = O-acetyl-L-serine(out). It carries out the reaction L-cysteine(in) = L-cysteine(out). Exporter of O-acetylserine (OAS) and cysteine. This Escherichia coli O139:H28 (strain E24377A / ETEC) protein is Cysteine/O-acetylserine efflux protein (eamB).